Here is a 178-residue protein sequence, read N- to C-terminus: ATP synthase subunit delta (178 aa).

This sequence belongs to the ATPase delta chain family. In terms of assembly, F-type ATPases have 2 components, F(1) - the catalytic core - and F(0) - the membrane proton channel. F(1) has five subunits: alpha(3), beta(3), gamma(1), delta(1), epsilon(1). F(0) has three main subunits: a(1), b(2) and c(10-14). The alpha and beta chains form an alternating ring which encloses part of the gamma chain. F(1) is attached to F(0) by a central stalk formed by the gamma and epsilon chains, while a peripheral stalk is formed by the delta and b chains.

The protein resides in the cell membrane. Its function is as follows. F(1)F(0) ATP synthase produces ATP from ADP in the presence of a proton or sodium gradient. F-type ATPases consist of two structural domains, F(1) containing the extramembraneous catalytic core and F(0) containing the membrane proton channel, linked together by a central stalk and a peripheral stalk. During catalysis, ATP synthesis in the catalytic domain of F(1) is coupled via a rotary mechanism of the central stalk subunits to proton translocation. This protein is part of the stalk that links CF(0) to CF(1). It either transmits conformational changes from CF(0) to CF(1) or is implicated in proton conduction. This chain is ATP synthase subunit delta, found in Mycoplasma pneumoniae (strain ATCC 29342 / M129 / Subtype 1) (Mycoplasmoides pneumoniae).